Consider the following 605-residue polypeptide: Alpha-amylase (605 aa).

The N-terminal stretch at 1–33 (MGVRRSLAALLAALLGCATSLVALTVAASPAHA) is a signal peptide. Ca(2+) is bound by residues asparagine 130 and aspartate 189. Aspartate 219 functions as the Nucleophile in the catalytic mechanism. Position 223 (histidine 223) interacts with Ca(2+). The Proton donor role is filled by glutamate 253. The region spanning 500 to 605 (GDDCTTVTAR…CSQNFYDSWR (106 aa)) is the CBM20 domain.

It belongs to the glycosyl hydrolase 13 family. In terms of assembly, monomer. Requires Ca(2+) as cofactor.

It carries out the reaction Endohydrolysis of (1-&gt;4)-alpha-D-glucosidic linkages in polysaccharides containing three or more (1-&gt;4)-alpha-linked D-glucose units.. The sequence is that of Alpha-amylase (tam) from Thermomonospora curvata.